A 433-amino-acid polypeptide reads, in one-letter code: Inositol hexakisphosphate kinase 1 (433 aa).

Positions 100 to 160 (ETVEQDDTPE…SPKVELHSHS (61 aa)) are disordered. Residues 113 to 123 (PRRKHSRRSLH) show a composition bias toward basic residues. Over residues 139-149 (SFETSESSQEA) the composition is skewed to polar residues. Residues 150–160 (KSPKVELHSHS) show a composition bias toward basic and acidic residues. S151 carries the phosphoserine modification. Residue 220–228 (PCVLDLKMG) coordinates substrate. The disordered stretch occupies residues 359-383 (EVPPPCGPSTSPSSTSLEAGPSSPP).

The protein belongs to the inositol phosphokinase (IPK) family. In terms of tissue distribution, highly expressed in brain and testis. Detected at much lower levels in heart, kidney, liver, lung and spleen.

It localises to the cytoplasm. The protein resides in the nucleus. It catalyses the reaction 1D-myo-inositol hexakisphosphate + ATP = 5-diphospho-1D-myo-inositol 1,2,3,4,6-pentakisphosphate + ADP. It carries out the reaction 1-diphospho-1D-myo-inositol 2,3,4,5,6-pentakisphosphate + ATP + H(+) = 1,5-bis(diphospho)-1D-myo-inositol 2,3,4,6-tetrakisphosphate + ADP. In terms of biological role, converts inositol hexakisphosphate (InsP6) to diphosphoinositol pentakisphosphate (InsP7/PP-InsP5). Converts 1,3,4,5,6-pentakisphosphate (InsP5) to PP-InsP4. The protein is Inositol hexakisphosphate kinase 1 (Ip6k1) of Mus musculus (Mouse).